The sequence spans 316 residues: Mitochondrial distribution and morphology protein 12 (316 aa).

In terms of domain architecture, SMP-LTD spans 1-312; it reads MSIDLEWNGL…FPNFHTLVLG (312 aa).

The protein belongs to the MDM12 family. Component of the ER-mitochondria encounter structure (ERMES) or MDM complex, composed of MMM1, MDM10, MDM12 and MDM34. An MMM1 homodimer associates with one molecule of MDM12 on each side in a pairwise head-to-tail manner, and the SMP-LTD domains of MMM1 and MDM12 generate a continuous hydrophobic tunnel for phospholipid trafficking.

It localises to the mitochondrion outer membrane. The protein resides in the endoplasmic reticulum membrane. Functionally, component of the ERMES/MDM complex, which serves as a molecular tether to connect the endoplasmic reticulum (ER) and mitochondria. Components of this complex are involved in the control of mitochondrial shape and protein biogenesis, and function in nonvesicular lipid trafficking between the ER and mitochondria. MDM12 is required for the interaction of the ER-resident membrane protein MMM1 and the outer mitochondrial membrane-resident beta-barrel protein MDM10. The MDM12-MMM1 subcomplex functions in the major beta-barrel assembly pathway that is responsible for biogenesis of all mitochondrial outer membrane beta-barrel proteins, and acts in a late step after the SAM complex. The MDM10-MDM12-MMM1 subcomplex further acts in the TOM40-specific pathway after the action of the MDM12-MMM1 complex. Essential for establishing and maintaining the structure of mitochondria and maintenance of mtDNA nucleoids. The chain is Mitochondrial distribution and morphology protein 12 from Postia placenta (strain ATCC 44394 / Madison 698-R) (Brown rot fungus).